The chain runs to 390 residues: Tuftelin (390 aa).

2 coiled-coil regions span residues Asp-88 to Arg-126 and Pro-163 to Val-352. Residues Asn-356–Pro-383 form a disordered region.

The protein belongs to the tuftelin family. In terms of assembly, interacts with TFIP11. May form oligomers. Ameloblasts, and also non-odontogenic tissues including kidney, lung, liver and testis.

It localises to the secreted. Its function is as follows. Involved in the structural organization of the epidermis. Involved in the mineralization and structural organization of enamel. This Mus musculus (Mouse) protein is Tuftelin (Tuft1).